Consider the following 137-residue polypeptide: MRKLIYIIVGIAGILGALSRYYLGLTIHEFWHHTFPLATLLINLAGCFLLAWLTTYIAKLNILPSDVITGIGTGFIGSFTTFSTLSVETIQLINHSEWGIAFLYVSCSILGGLIMSGLGYTLGDFLLKKHLTEGDHL.

A run of 4 helical transmembrane segments spans residues 4–24, 37–57, 67–87, and 98–118; these read LIYIIVGIAGILGALSRYYLG, LATLLINLAGCFLLAWLTTYI, VITGIGTGFIGSFTTFSTLSV, and WGIAFLYVSCSILGGLIMSGL. The Na(+) site is built by glycine 77 and threonine 80.

The protein belongs to the fluoride channel Fluc/FEX (TC 1.A.43) family.

It localises to the cell membrane. It carries out the reaction fluoride(in) = fluoride(out). With respect to regulation, na(+) is not transported, but it plays an essential structural role and its presence is essential for fluoride channel function. In terms of biological role, fluoride-specific ion channel. Important for reducing fluoride concentration in the cell, thus reducing its toxicity. In Bacillus anthracis, this protein is Fluoride-specific ion channel FluC 1.